A 283-amino-acid chain; its full sequence is Small ribosomal subunit protein uS3 (283 aa).

One can recognise a KH type-2 domain in the interval 39–107 (VRAYLKTKLK…PVHVNIEEIR (69 aa)). The disordered stretch occupies residues 209–283 (PSGEPPVDLT…GAVPAEKAGE (75 aa)). Residues 217–235 (LTKEDDTKRRGPRRDDGKP) are compositionally biased toward basic and acidic residues. Residues 244-260 (PEGQPGAAAAPGAAPAA) show a composition bias toward low complexity.

It belongs to the universal ribosomal protein uS3 family. In terms of assembly, part of the 30S ribosomal subunit. Forms a tight complex with proteins S10 and S14.

Its function is as follows. Binds the lower part of the 30S subunit head. Binds mRNA in the 70S ribosome, positioning it for translation. This chain is Small ribosomal subunit protein uS3, found in Herminiimonas arsenicoxydans.